The sequence spans 261 residues: Small ribosomal subunit protein uS2 (261 aa).

This sequence belongs to the universal ribosomal protein uS2 family.

The sequence is that of Small ribosomal subunit protein uS2 from Rhodospirillum centenum (strain ATCC 51521 / SW).